The following is a 161-amino-acid chain: Cell cycle link protein (161 aa).

The interval 9 to 21 (MPDDVKREIKEIY) is binding to host SKP1 protein. The short motif at 111–115 (LYCDE) is the LXCXE motif, interaction with host RBR element.

In terms of assembly, interacts with host SKP1. Interacts (via LXCXE domain) with host retinoblastoma-related protein 2 (RBR2). Interacts (via LXCXE domain) with human RB1. Interacts (via LXCXE domain) with retinoblastoma-related proteins (RBR).

Functionally, interacts with and disrupts the function of host retinoblastoma-related proteins RBR, which are key regulators of the cell cycle. Induces transcriptional activation of E2F-regulated S-phase and G2/M-phase-specific genes. Inactivation of the ability of RBR to arrest the cell cycle leads to the stimulation of viral DNA replication. Acts as a suppressor of RNA-mediated gene silencing, also known as post-transcriptional gene silencing (PTGS), a mechanism of plant viral defense that limits the accumulation of viral RNAs. The sequence is that of Cell cycle link protein (DNA-C) from Musa (BBTV).